The sequence spans 364 residues: MQERHTEQDYRALLIADTPIIDVRAPIEFEQGAMPAAINLPLMNNDERAAVGICYKQQGSDAALALGHKLVAGEIRQQRIDAWRAACLQNPHGILCCARGGQRSHIVQRWLHDAGIDYPLVEGGYKALRQTAIQATIELSQKPIVLIGGCTGCGKTLLVQQQPNGVDLEGLARHRGSAFGRTLQPQLSQASFENLLAAEMLKTDAHQDLRLWVLEDESRMIGSNHLPECLRERMTQATIAVVEDPFEIRLERLNEEYFLRMHHDFTHAYGDEQGWQEYCEYLHHGLSAIKRRLGLQRYNELAARLDAALTTQLTTGSTDGHLAWLVPLLEEYYDPMYRYQLEKKAEKVVFRGEWAEVAEWVKAQ.

One can recognise a Rhodanese domain in the interval 14–137 (LIADTPIIDV…LRQTAIQATI (124 aa)). The S-selanylcysteine intermediate role is filled by Cys97.

It belongs to the SelU family. Monomer.

It catalyses the reaction 5-methylaminomethyl-2-thiouridine(34) in tRNA + selenophosphate + (2E)-geranyl diphosphate + H2O + H(+) = 5-methylaminomethyl-2-selenouridine(34) in tRNA + (2E)-thiogeraniol + phosphate + diphosphate. It carries out the reaction 5-methylaminomethyl-2-thiouridine(34) in tRNA + (2E)-geranyl diphosphate = 5-methylaminomethyl-S-(2E)-geranyl-thiouridine(34) in tRNA + diphosphate. The catalysed reaction is 5-methylaminomethyl-S-(2E)-geranyl-thiouridine(34) in tRNA + selenophosphate + H(+) = 5-methylaminomethyl-2-(Se-phospho)selenouridine(34) in tRNA + (2E)-thiogeraniol. The enzyme catalyses 5-methylaminomethyl-2-(Se-phospho)selenouridine(34) in tRNA + H2O = 5-methylaminomethyl-2-selenouridine(34) in tRNA + phosphate. Its function is as follows. Involved in the post-transcriptional modification of the uridine at the wobble position (U34) of tRNA(Lys), tRNA(Glu) and tRNA(Gln). Catalyzes the conversion of 2-thiouridine (S2U-RNA) to 2-selenouridine (Se2U-RNA). Acts in a two-step process involving geranylation of 2-thiouridine (S2U) to S-geranyl-2-thiouridine (geS2U) and subsequent selenation of the latter derivative to 2-selenouridine (Se2U) in the tRNA chain. This is tRNA 2-selenouridine synthase from Escherichia coli O6:K15:H31 (strain 536 / UPEC).